Here is a 368-residue protein sequence, read N- to C-terminus: Glycolate oxidase 3 (368 aa).

Residue M1 is modified to N-acetylmethionine. An FMN hydroxy acid dehydrogenase domain is found at 1-359 (MEITNVMEYE…SRTHIKTDWD (359 aa)). Position 24 (Y24) interacts with glyoxylate. FMN-binding positions include 77–79 (PTA), S106, 127–129 (QLY), and T155. Residue Y129 coordinates glyoxylate. Position 164 (R164) interacts with glyoxylate. Residues K230 and S252 each coordinate FMN. Glyoxylate contacts are provided by H254 and R257. H254 functions as the Proton acceptor in the catalytic mechanism. FMN contacts are provided by residues 285 to 289 (DGGVR) and 308 to 309 (GR).

It belongs to the FMN-dependent alpha-hydroxy acid dehydrogenase family. As to quaternary structure, homotetramer. Requires FMN as cofactor.

It is found in the peroxisome. It carries out the reaction glycolate + O2 = glyoxylate + H2O2. It participates in photosynthesis; photorespiration; glycine from 2-phosphoglycolate: step 2/3. Its function is as follows. Catalyzes the oxidation of glycolate to glyoxylate, with a reduction of O2 to H2O2. Is a key enzyme in photorespiration in green plants. The sequence is that of Glycolate oxidase 3 (GLO5) from Arabidopsis thaliana (Mouse-ear cress).